The primary structure comprises 215 residues: N-(5'-phosphoribosyl)anthranilate isomerase (215 aa).

The protein belongs to the TrpF family.

The catalysed reaction is N-(5-phospho-beta-D-ribosyl)anthranilate = 1-(2-carboxyphenylamino)-1-deoxy-D-ribulose 5-phosphate. The protein operates within amino-acid biosynthesis; L-tryptophan biosynthesis; L-tryptophan from chorismate: step 3/5. This chain is N-(5'-phosphoribosyl)anthranilate isomerase, found in Rippkaea orientalis (strain PCC 8801 / RF-1) (Cyanothece sp. (strain PCC 8801)).